Here is a 393-residue protein sequence, read N- to C-terminus: S-adenosylmethionine synthase 1 (393 aa).

Position 9 (Glu9) interacts with Mg(2+). Residue His15 participates in ATP binding. A K(+)-binding site is contributed by Glu43. Residues Glu56 and Gln99 each contribute to the L-methionine site. Cys114 is subject to S-nitrosocysteine. ATP contacts are provided by residues 167–169 (DGK), 235–238 (SGRF), Asp246, 252–253 (RK), Ala269, Lys273, and Lys277. Asp246 serves as a coordination point for L-methionine. Lys277 is an L-methionine binding site.

The protein belongs to the AdoMet synthase family. As to quaternary structure, homotetramer. Interacts with GRF3. It depends on Mn(2+) as a cofactor. Requires Mg(2+) as cofactor. Co(2+) serves as cofactor. The cofactor is K(+). S-nitrosylated in the presence of NO. The inhibition of SAM1 activity by S-nitrosylation could contribute to the cross-talk between ethylene and NO signaling. In terms of tissue distribution, highly expressed in stems and roots.

It is found in the cytoplasm. It catalyses the reaction L-methionine + ATP + H2O = S-adenosyl-L-methionine + phosphate + diphosphate. Its pathway is amino-acid biosynthesis; S-adenosyl-L-methionine biosynthesis; S-adenosyl-L-methionine from L-methionine: step 1/1. With respect to regulation, reversibly inhibited by NO. Inhibited by 5,5'-dithiobis-2-nitrobenzoic acid (DTNB) and N-ethylmaleimide (NEM) (in vitro). In terms of biological role, catalyzes the formation of S-adenosylmethionine from methionine and ATP. The reaction comprises two steps that are both catalyzed by the same enzyme: formation of S-adenosylmethionine (AdoMet) and triphosphate, and subsequent hydrolysis of the triphosphate. This chain is S-adenosylmethionine synthase 1 (SAM1), found in Arabidopsis thaliana (Mouse-ear cress).